Reading from the N-terminus, the 470-residue chain is Cysteine--tRNA ligase (470 aa).

Cysteine 28 is a binding site for Zn(2+). Residues 30–40 (PTVYNYIHIGN) carry the 'HIGH' region motif. Residues cysteine 212, histidine 237, and glutamate 241 each contribute to the Zn(2+) site. Residues 271 to 275 (KMSKS) carry the 'KMSKS' region motif. ATP is bound at residue lysine 274.

The protein belongs to the class-I aminoacyl-tRNA synthetase family. In terms of assembly, monomer. The cofactor is Zn(2+).

It localises to the cytoplasm. The enzyme catalyses tRNA(Cys) + L-cysteine + ATP = L-cysteinyl-tRNA(Cys) + AMP + diphosphate. This chain is Cysteine--tRNA ligase, found in Lactiplantibacillus plantarum (strain ATCC BAA-793 / NCIMB 8826 / WCFS1) (Lactobacillus plantarum).